Reading from the N-terminus, the 448-residue chain is Proline iminopeptidase aneH (448 aa).

Positions 64–191 constitute an AB hydrolase-1 domain; sequence PWMLYLQGGP…VEVFIGGGPC (128 aa). The active-site Nucleophile is Ser164. Asp397 is an active-site residue. The Proton donor role is filled by His425.

It belongs to the peptidase S33 family. Homooligomer.

It is found in the cytoplasm. The catalysed reaction is Release of N-terminal proline from a peptide.. The protein operates within secondary metabolite biosynthesis. Functionally, proline iminopeptidase; part of the gene cluster that mediates the biosynthesis of aculenes, a unique type of norsesquiterpenes that contain a nordaucane skeleton linked to an L-proline moiety and are of mixed biosynthetic origin. The pathway begins with the synthesis of dauca-4,7-diene by the terpene cyclase aneC using farnesyl pyrophosphate (FPP) as substrate. The cytochrome P450 monooxygenase aneF then performs the initial oxidation at C-12 of dauca-4,7-diene to yield asperaculane D. Asperaculane D is substrate of the cytochrome P450 monooxygenase aneD for C-10 hydroxylation to yield asperaculane E. The cytochrome P450 monooxygenase aneG then converts asperaculane E into aculene D via C-2 oxidation. The monomodular nonribosomal peptide synthtase aneB adenylates L-proline and the thiohydrolase aneE transfers this activated L-proline derivative to aculenes D and C to produce respectively aculenes B and A. The dioxygenase aneA converts aculene D into aculene C, and aculene B into aculene A by introducing the 5,6-alkene moiety. Asperculanes A, B, C and F, as well as 14-prolyl asperculane C, might be shunt products of the pathway. The sequence is that of Proline iminopeptidase aneH from Aspergillus aculeatus (strain ATCC 16872 / CBS 172.66 / WB 5094).